The sequence spans 167 residues: U-scoloptoxin(08)-Er5b (167 aa).

Positions 1–22 (MKTNCEFPLLCLLIVLVANVEG) are cleaved as a signal peptide. Positions 23 to 94 (EVEDTGLKMV…KRLWRNWERR (72 aa)) are excised as a propeptide. RLWRNWE repeat units lie at residues 34–40 (RLWRNWE), 61–67 (RLWRNWE), and 86–92 (RLWRNWE). Glutamine 95 is subject to Pyrrolidone carboxylic acid. Residues 107–113 (ELWRNWE) form an RLWRNWE 4; approximate repeat. A propeptide spanning residues 112–118 (WEDLKRR) is cleaved from the precursor. Pyrrolidone carboxylic acid is present on glutamine 119. The stretch at 134 to 140 (RLWRNWE) is one RLWRNWE 5 repeat. The propeptide occupies 139-167 (WEDNHATLRKRSADSLSRQKRLGKERGKE). A disordered region spans residues 147-167 (RKRSADSLSRQKRLGKERGKE).

The protein belongs to the scoloptoxin-08 family. Expressed by the venom gland.

Its subcellular location is the secreted. This Ethmostigmus rubripes (Giant centipede) protein is U-scoloptoxin(08)-Er5b.